Here is a 152-residue protein sequence, read N- to C-terminus: UPF0178 protein SaurJH9_0705 (152 aa).

The protein belongs to the UPF0178 family.

The polypeptide is UPF0178 protein SaurJH9_0705 (Staphylococcus aureus (strain JH9)).